Consider the following 967-residue polypeptide: Zinc finger protein with KRAB and SCAN domains 2 (967 aa).

Residue Lys-22 forms a Glycyl lysine isopeptide (Lys-Gly) (interchain with G-Cter in SUMO2) linkage. The SCAN box domain maps to Arg-45–Thr-127. The disordered stretch occupies residues Trp-150 to Leu-205. Basic and acidic residues predominate over residues Val-167 to Arg-185. In terms of domain architecture, KRAB spans Val-229 to Ile-300. Residues Lys-242, Lys-259, Lys-277, Lys-337, Lys-482, and Lys-529 each participate in a glycyl lysine isopeptide (Lys-Gly) (interchain with G-Cter in SUMO2) cross-link. The segment covering Arg-586 to Ser-602 has biased composition (low complexity). Positions Arg-586–Gln-626 are disordered. Phosphoserine occurs at positions 591 and 600. Glycyl lysine isopeptide (Lys-Gly) (interchain with G-Cter in SUMO2) cross-links involve residues Lys-734, Lys-745, and Lys-752. C2H2-type zinc fingers lie at residues Tyr-775–His-797, Phe-803–His-825, Tyr-831–His-853, Tyr-859–His-881, Tyr-887–His-909, and Tyr-915–His-937. The segment at Lys-941–Phe-967 is disordered. Over residues Asn-954–Phe-967 the composition is skewed to basic and acidic residues.

It belongs to the krueppel C2H2-type zinc-finger protein family.

It localises to the nucleus. Functionally, may be involved in transcriptional regulation. In Homo sapiens (Human), this protein is Zinc finger protein with KRAB and SCAN domains 2 (ZKSCAN2).